Reading from the N-terminus, the 1706-residue chain is Bifunctional hemolysin/adenylate cyclase (1706 aa).

Residues 1–399 form an a, catalytic region; it reads MQQSHQAGYA…RRPSLGAVER (399 aa). 349–356 serves as a coordination point for ATP; the sequence is AYGVAGKS. Residues 383–405 form a disordered region; sequence VPASPGLRRPSLGAVERQDSGYD. A b, Ala/Gly-rich region spans residues 400-912; that stretch reads QDSGYDSLDG…LKHSIKLDVI (513 aa). The segment at 500-698 is required for interaction with CyaC; the sequence is LSAAVFGLGE…SVVGAPVAVV (199 aa). Residues lysine 860 and lysine 983 are each lipidated (N6-palmitoyl lysine). Positions 913 to 1656 are c; the sequence is GGDGDDVVLA…RDADHRVEII (744 aa). Hemolysin-type calcium-binding repeat units lie at residues 1014-1031, 1032-1049, 1050-1067, 1155-1172, 1173-1190, 1279-1296, 1297-1314, 1315-1332, 1335-1352, 1411-1428, 1429-1446, 1447-1464, 1468-1484, 1537-1554, 1555-1572, 1573-1590, and 1603-1620; these read IGGAGNDSITGNAHDNFL, AGGSGDDRLDGGAGNDTL, VGGEGQNTVIGGAGDDVF, WGHDGNDTIRGRGGDDIL, RGGLGLDTLYGEDGNDIF, MGQGGDDTVRGGDGDDLL, FGGDGNDMLYGDAGNDTL, YGGLGDDTLEGGAGNDWF, TQAREHDVLRGGDGVDTV, TGDAQANVLRGAGGADVL, AGGEGDDVLLGGDGDDQL, SGDAGRDRLYGEAGDDWF, AANAGNLLDGGDGRDTV, IGDAGANVLNGLAGNDVL, SGGAGDDVLLGDEGSDLL, SGDAGNDDLFGGQGDDTY, and ESGGGHDTIRINAGADQL. Residues 1657 to 1706 form a d, Asp/Gly-rich region; that stretch reads HAANQAVDQAGIEKLVEAMAQYPDPGAAAAAPPAARVPDTLMQSLAVNWR.

In the N-terminal section; belongs to the adenylyl cyclase class-2 family. It in the C-terminal section; belongs to the RTX prokaryotic toxin family. In terms of processing, released in a processed form. Post-translationally, palmitoylated at Lys-860 and Lys-983 by CyaC. The toxin only becomes active when modified in position Lys-983: palmitoylation is required for efficient membrane insertion and pore formation of the acylated Hemolysin chain.

It is found in the secreted. It localises to the host cell membrane. The enzyme catalyses ATP = 3',5'-cyclic AMP + diphosphate. Its activity is regulated as follows. Activated by host calmodulin. Functionally, bifunctional adenylate cyclase toxin-hemolysin that plays a crucial role in host colonization. It causes whooping cough by acting on mammalian cells by elevating cAMP-concentration and thus disrupts normal cell function. Its function is as follows. Adenylate cyclase that is activated by host intracellular calmodulin and catalyzes un-regulated conversion of ATP to cAMP, thereby impairing microbicidal functions of immune effector cells and inducing apoptosis of lung macrophages. Hemolysin that forms small cation-selective membrane channels, leading to hemolytic activity. The hemolytic activity of CyaA is weak compared with that of the HlyA of E.coli. The polypeptide is Bifunctional hemolysin/adenylate cyclase (cya) (Bordetella pertussis (strain Tohama I / ATCC BAA-589 / NCTC 13251)).